Consider the following 320-residue polypeptide: Very-long-chain 3-oxoacyl-CoA reductase (320 aa).

The helical transmembrane segment at 17–37 threads the bilayer; that stretch reads FWYLGVVAAVWWGLRAAWCLL. NADP(+) is bound at residue 56–85; it reads GKWAVVTGATDGIGKAYAEELAKRGMNIVL. Helical transmembrane passes span 189–209 and 283–303; these read GVIL…LTVY and AIMG…SLGM. A substrate-binding site is contributed by serine 196. Tyrosine 209 functions as the Proton acceptor in the catalytic mechanism.

Belongs to the short-chain dehydrogenases/reductases (SDR) family. 17-beta-HSD 3 subfamily.

The protein resides in the endoplasmic reticulum membrane. It catalyses the reaction a very-long-chain (3R)-3-hydroxyacyl-CoA + NADP(+) = a very-long-chain 3-oxoacyl-CoA + NADPH + H(+). The enzyme catalyses 17beta-estradiol + NAD(+) = estrone + NADH + H(+). The catalysed reaction is 17beta-estradiol + NADP(+) = estrone + NADPH + H(+). It carries out the reaction 3-oxooctadecanoyl-CoA + NADPH + H(+) = (3R)-hydroxyoctadecanoyl-CoA + NADP(+). It catalyses the reaction (7Z,10Z,13Z,16Z)-3-oxodocosatetraenoyl-CoA + NADPH + H(+) = (3R)-hydroxy-(7Z,10Z,13Z,16Z)-docosatetraenoyl-CoA + NADP(+). The enzyme catalyses 3-oxo-(7Z,10Z,13Z,16Z,19Z)-docosapentaenoyl-CoA + NADPH + H(+) = (3R)-hydroxy-(7Z,10Z,13Z,16Z,19Z)-docosapentaenoyl-CoA + NADP(+). The catalysed reaction is (8Z,11Z,14Z)-3-oxoeicosatrienoyl-CoA + NADPH + H(+) = (3R)-hydroxy-(8Z,11Z,14Z)-eicosatrienoyl-CoA + NADP(+). It participates in lipid metabolism; fatty acid biosynthesis. It functions in the pathway steroid biosynthesis; estrogen biosynthesis. Catalyzes the second of the four reactions of the long-chain fatty acids elongation cycle. This endoplasmic reticulum-bound enzymatic process, allows the addition of two carbons to the chain of long- and very long-chain fatty acids/VLCFAs per cycle. This enzyme has a 3-ketoacyl-CoA reductase activity, reducing 3-ketoacyl-CoA to 3-hydroxyacyl-CoA, within each cycle of fatty acid elongation. Thereby, it may participate in the production of VLCFAs of different chain lengths that are involved in multiple biological processes as precursors of membrane lipids and lipid mediators. May also catalyze the transformation of estrone (E1) into estradiol (E2) and play a role in estrogen formation. The sequence is that of Very-long-chain 3-oxoacyl-CoA reductase (hsd17b12) from Xenopus tropicalis (Western clawed frog).